A 66-amino-acid polypeptide reads, in one-letter code: Protein I177L (66 aa).

An N-linked (GlcNAc...) asparagine; by host glycan is attached at asparagine 11.

It belongs to the asfivirus I177L family.

Its subcellular location is the virion. The polypeptide is Protein I177L (African swine fever virus (strain Badajoz 1971 Vero-adapted) (Ba71V)).